We begin with the raw amino-acid sequence, 439 residues long: Fibroleukin (439 aa).

A signal peptide spans 1–23 (MKLANWYWLSSAVLATYGFLVVA). Asparagine 25 is a glycosylation site (N-linked (GlcNAc...) asparagine). Residues 73 to 165 (SRIEEVFKEV…GRLEKLNLVN (93 aa)) adopt a coiled-coil conformation. The segment at 103-126 (ADDNGDPGRNGLLLPSTGAPGEVG) is disordered. Asparagine 179, asparagine 235, asparagine 263, and asparagine 336 each carry an N-linked (GlcNAc...) asparagine glycan. Positions 204–436 (PVQHLIYKDC…EAKMMIRPKH (233 aa)) constitute a Fibrinogen C-terminal domain. Residues cysteine 213 and cysteine 242 are joined by a disulfide bond. An intrachain disulfide couples cysteine 371 to cysteine 384.

Homotetramer; disulfide-linked. As to expression, constitutively expressed in cytotoxic T-cells.

The protein resides in the secreted. In terms of biological role, may play a role in physiologic lymphocyte functions at mucosal sites. In Homo sapiens (Human), this protein is Fibroleukin (FGL2).